The chain runs to 652 residues: DNA ligase (652 aa).

NAD(+) is bound by residues 29 to 33, 78 to 79, and glutamate 107; these read DQEYD and SL. Lysine 109 (N6-AMP-lysine intermediate) is an active-site residue. NAD(+) is bound by residues arginine 130, glutamate 164, lysine 278, and lysine 302. Positions 395, 398, 413, and 418 each coordinate Zn(2+). Residues 577 to 652 enclose the BRCT domain; sequence DTSAQLFGLT…VKDENWLLQL (76 aa).

It belongs to the NAD-dependent DNA ligase family. LigA subfamily. Requires Mg(2+) as cofactor. The cofactor is Mn(2+).

The enzyme catalyses NAD(+) + (deoxyribonucleotide)n-3'-hydroxyl + 5'-phospho-(deoxyribonucleotide)m = (deoxyribonucleotide)n+m + AMP + beta-nicotinamide D-nucleotide.. In terms of biological role, DNA ligase that catalyzes the formation of phosphodiester linkages between 5'-phosphoryl and 3'-hydroxyl groups in double-stranded DNA using NAD as a coenzyme and as the energy source for the reaction. It is essential for DNA replication and repair of damaged DNA. This chain is DNA ligase, found in Streptococcus uberis (strain ATCC BAA-854 / 0140J).